We begin with the raw amino-acid sequence, 727 residues long: Sodium-dependent neutral amino acid transporter SLC6A17 (727 aa).

The Cytoplasmic portion of the chain corresponds to Met-1–Tyr-69. Phosphoserine occurs at positions 13 and 20. Residues Ile-70–Cys-90 form a helical membrane-spanning segment. Residues Gln-91–Gly-95 lie on the Extracellular side of the membrane. Residues Gly-96–Leu-116 traverse the membrane as a helical segment. The Cytoplasmic segment spans residues Glu-117 to Cys-147. A helical transmembrane segment spans residues Ile-148–Phe-168. The Extracellular segment spans residues Phe-169 to Gly-222. An N-linked (GlcNAc...) asparagine glycan is attached at Asn-186. The helical transmembrane segment at Leu-223 to Val-243 threads the bilayer. Residues Lys-244–Met-253 are Cytoplasmic-facing. The chain crosses the membrane as a helical span at residues Tyr-254–Leu-274. Residues Arg-275 to Glu-300 lie on the Extracellular side of the membrane. Residues Ala-301–Ser-321 traverse the membrane as a helical segment. Over Tyr-322–Ala-334 the chain is Cytoplasmic. A helical membrane pass occupies residues Leu-335 to Leu-355. At Gly-356–Val-460 the chain is on the extracellular side. The residue at position 377 (Tyr-377) is a Phosphotyrosine. N-linked (GlcNAc...) asparagine glycosylation occurs at Asn-393. The chain crosses the membrane as a helical span at residues Met-461 to Ile-481. At Thr-482–Lys-490 the chain is on the cytoplasmic side. A helical membrane pass occupies residues Val-491 to Phe-511. The Extracellular segment spans residues Val-512–Ser-527. The helical transmembrane segment at Ala-528–Gly-548 threads the bilayer. At Thr-549–Lys-573 the chain is on the cytoplasmic side. The chain crosses the membrane as a helical span at residues Phe-574–Thr-594. The Extracellular segment spans residues Pro-595–Ala-617. Residues Met-618–Leu-638 form a helical membrane-spanning segment. The Cytoplasmic segment spans residues Arg-639–Leu-727. Ser-665 and Ser-701 each carry phosphoserine. Residues Val-680–Leu-727 form a disordered region. Over residues Gly-698–Pro-709 the composition is skewed to polar residues.

This sequence belongs to the sodium:neurotransmitter symporter (SNF) (TC 2.A.22) family.

Its subcellular location is the cytoplasmic vesicle. The protein localises to the secretory vesicle. The protein resides in the synaptic vesicle membrane. It is found in the postsynapse. It localises to the presynapse. It carries out the reaction L-proline(in) + Na(+)(in) = L-proline(out) + Na(+)(out). It catalyses the reaction L-leucine(in) + Na(+)(in) = L-leucine(out) + Na(+)(out). The enzyme catalyses glycine(in) + Na(+)(in) = glycine(out) + Na(+)(out). The catalysed reaction is L-alanine(in) + Na(+)(in) = L-alanine(out) + Na(+)(out). It carries out the reaction L-glutamine(in) + Na(+)(in) = L-glutamine(out) + Na(+)(out). Its function is as follows. Synaptic vesicle transporter with apparent selectivity for neutral amino acids. The transport is sodium-coupled but chloride-independent, likely driven by the proton electrochemical gradient generated by vacuolar H(+)-ATPase in an overall electrogenic mechanism. May contribute to the synaptic uptake of neurotransmitter precursors in a process coupled in part to vesicle exocytosis. The chain is Sodium-dependent neutral amino acid transporter SLC6A17 from Homo sapiens (Human).